We begin with the raw amino-acid sequence, 167 residues long: Large ribosomal subunit protein uL5 (167 aa).

This sequence belongs to the universal ribosomal protein uL5 family. Part of the 50S ribosomal subunit; contacts the 5S rRNA and probably tRNA. Forms a bridge to the 30S subunit in the 70S ribosome.

This is one of the proteins that bind and probably mediate the attachment of the 5S RNA into the large ribosomal subunit, where it forms part of the central protuberance. In the 70S ribosome it contacts protein S13 of the 30S subunit (bridge B1b), connecting the 2 subunits; this bridge is implicated in subunit movement. May contact the P site tRNA; the 5S rRNA and some of its associated proteins might help stabilize positioning of ribosome-bound tRNAs. This is Large ribosomal subunit protein uL5 from Methanoculleus marisnigri (strain ATCC 35101 / DSM 1498 / JR1).